We begin with the raw amino-acid sequence, 671 residues long: cGMP-dependent protein kinase 1 (671 aa).

At serine 2 the chain carries N-acetylserine. Positions 2 to 59 form a coiled coil; the sequence is SELEEDFAKILMLKEERIKELEKRLSEKEEEIQELKRKLHKCQSVLPVPSTHIGPRTT. Residues 2–102 are required for dimerization; the sequence is SELEEDFAKI…LIKEAILDND (101 aa). A leucine-zipper region spans residues 9-44; sequence AKILMLKEERIKELEKRLSEKEEEIQELKRKLHKCQ. Positions 50–75 are autoinhibitory domain; it reads PSTHIGPRTTRAQGISAEPQTYRSFH. Phosphothreonine; by autocatalysis is present on threonine 59. Residues 103 to 220 are cGMP-binding, high affinity; sequence FMKNLELSQI…EYMEFLKSVP (118 aa). 3',5'-cyclic AMP contacts are provided by residues 167-170 and 177-178; these read GELA and RT. Residues 167 to 170, 177 to 178, arginine 282, 291 to 294, 301 to 302, and tyrosine 336 contribute to the 3',5'-cyclic GMP site; these read GELA, RT, and GEKA. Residues 221-341 are cGMP-binding, low affinity; sequence TFQSLPEEIL…SNKAYEDAEA (121 aa). A Protein kinase domain is found at 360–619; the sequence is FNIIDTLGVG…VKDIQKHKWF (260 aa). Residues 366–374 and lysine 390 each bind ATP; that span reads LGVGGFGRV. Aspartate 484 serves as the catalytic Proton acceptor. Threonine 515 carries the phosphothreonine modification. The AGC-kinase C-terminal domain maps to 620-671; sequence EGFNWEGLRKGTLTPPIIPSVASPTDTSNFDSFPEDNDEPPPDDNSGWDIDF. A disordered region spans residues 635 to 671; the sequence is PIIPSVASPTDTSNFDSFPEDNDEPPPDDNSGWDIDF. Residues 652-661 are compositionally biased toward acidic residues; the sequence is FPEDNDEPPP.

This sequence belongs to the protein kinase superfamily. AGC Ser/Thr protein kinase family. cGMP subfamily. Isoform alpha: parallel homodimer or heterodimer and also heterotetramer. Interacts directly with PPP1R12A. Non-covalent dimer of dimer of PRKG1-PRKG1 and PPP1R12A-PPP1R12A. This interaction targets PRKG1 to stress fibers to mediate smooth muscle cell relaxation and vasodilation in responses to rises in cGMP. Isoform beta: antiparallel homodimer. Part of cGMP kinase signaling complex at least composed of ACTA2/alpha-actin, CNN1/calponin H1, PLN/phospholamban, PRKG1 and ITPR1. Interacts with IRAG1. Forms a stable complex with ITPR1, IRAG1, and isoform beta of PRKG1. Interacts with TRPC7 (via ankyrin repeat domain). Isoform alpha interacts with RGS2. Interacts with GTF2I. In terms of processing, autophosphorylation increases kinase activity. 65 kDa monomer is produced by proteolytic cleavage. In terms of tissue distribution, high concentrations are detected in various smooth muscle: lung, rumen, trachea, aorta, uterus and stomach. Isoform alpha is expressed predominantly in heart, cerebellum and lung, whereas the beta isoform is expressed in high concentrations in trachea, aorta, stomach and uterus.

It is found in the cytoplasm. The catalysed reaction is L-seryl-[protein] + ATP = O-phospho-L-seryl-[protein] + ADP + H(+). The enzyme catalyses L-threonyl-[protein] + ATP = O-phospho-L-threonyl-[protein] + ADP + H(+). Its activity is regulated as follows. In the absence of cGMP, PRKG1 activity is suppressed by autoinhibitory contacts. In terms of biological role, serine/threonine protein kinase that acts as a key mediator of the nitric oxide (NO)/cGMP signaling pathway. GMP binding activates PRKG1, which phosphorylates serines and threonines on many cellular proteins. Numerous protein targets for PRKG1 phosphorylation are implicated in modulating cellular calcium, but the contribution of each of these targets may vary substantially among cell types. Proteins that are phosphorylated by PRKG1 regulate platelet activation and adhesion, smooth muscle contraction, cardiac function, gene expression, feedback of the NO-signaling pathway, and other processes involved in several aspects of the CNS like axon guidance, hippocampal and cerebellar learning, circadian rhythm and nociception. Smooth muscle relaxation is mediated through lowering of intracellular free calcium, by desensitization of contractile proteins to calcium, and by decrease in the contractile state of smooth muscle or in platelet activation. Regulates intracellular calcium levels via several pathways: phosphorylates IRAG1 and inhibits IP3-induced Ca(2+) release from intracellular stores, phosphorylation of KCNMA1 (BKCa) channels decreases intracellular Ca(2+) levels, which leads to increased opening of this channel. PRKG1 phosphorylates the canonical transient receptor potential channel (TRPC) family which inactivates the associated inward calcium current. Another mode of action of NO/cGMP/PKGI signaling involves PKGI-mediated inactivation of the Ras homolog gene family member A (RhoA). Phosphorylation of RHOA by PRKG1 blocks the action of this protein in myriad processes: regulation of RHOA translocation; decreasing contraction; controlling vesicle trafficking, reduction of myosin light chain phosphorylation resulting in vasorelaxation. Activation of PRKG1 by NO signaling also alters gene expression in a number of tissues. In smooth muscle cells, increased cGMP and PRKG1 activity influence expression of smooth muscle-specific contractile proteins, levels of proteins in the NO/cGMP signaling pathway, down-regulation of the matrix proteins osteopontin and thrombospondin-1 to limit smooth muscle cell migration and phenotype. Regulates vasodilator-stimulated phosphoprotein (VASP) functions in platelets and smooth muscle. This is cGMP-dependent protein kinase 1 (PRKG1) from Bos taurus (Bovine).